We begin with the raw amino-acid sequence, 73 residues long: Cell division protein ZapB (73 aa).

Residues 3–66 (LELLSQLETK…SWSDKVNGLV (64 aa)) adopt a coiled-coil conformation.

The protein belongs to the ZapB family. In terms of assembly, homodimer. The ends of the coiled-coil dimer bind to each other, forming polymers. Interacts with FtsZ.

It is found in the cytoplasm. Its function is as follows. Non-essential, abundant cell division factor that is required for proper Z-ring formation. It is recruited early to the divisome by direct interaction with FtsZ, stimulating Z-ring assembly and thereby promoting cell division earlier in the cell cycle. Its recruitment to the Z-ring requires functional FtsA or ZipA. In Shewanella frigidimarina (strain NCIMB 400), this protein is Cell division protein ZapB.